The primary structure comprises 339 residues: Probable G-protein coupled receptor 33 (339 aa).

Residues Met-1 to Thr-30 are Extracellular-facing. Asn-5, Asn-12, and Asn-19 each carry an N-linked (GlcNAc...) asparagine glycan. Residues Ile-31–Met-53 traverse the membrane as a helical segment. Topologically, residues Leu-54–Thr-64 are cytoplasmic. The helical transmembrane segment at Leu-65–Thr-86 threads the bilayer. Over Ser-87–Ala-103 the chain is Extracellular. Cysteines 101 and 179 form a disulfide. Residues Phe-104–Val-124 form a helical membrane-spanning segment. The Cytoplasmic portion of the chain corresponds to Ala-125–His-143. Residues Trp-144–Val-165 form a helical membrane-spanning segment. Topologically, residues Phe-166–Arg-209 are extracellular. The helical transmembrane segment at Phe-210–Thr-230 threads the bilayer. At Lys-231–Val-246 the chain is on the cytoplasmic side. Residues Met-247–Val-268 form a helical membrane-spanning segment. Topologically, residues Leu-269–Leu-283 are extracellular. Residues Ala-284–Gly-303 traverse the membrane as a helical segment. Residues Glu-304–Ile-339 lie on the Cytoplasmic side of the membrane.

Belongs to the G-protein coupled receptor 1 family. As to expression, expressed predominantly in lung, spleen and testis.

Its subcellular location is the cell membrane. Its function is as follows. Orphan receptor; could be a chemoattractant receptor. The sequence is that of Probable G-protein coupled receptor 33 (Gpr33) from Mus musculus (Mouse).